A 538-amino-acid polypeptide reads, in one-letter code: [Pyruvate dehydrogenase [acetyl-transferring]]-phosphatase 1, mitochondrial (538 aa).

The N-terminal 71 residues, 1 to 71, are a transit peptide targeting the mitochondrion; sequence MPAPTQLFFP…WWQYTQGRRY (71 aa). Positions 109 to 525 constitute a PPM-type phosphatase domain; the sequence is ILGFDSNQLP…DDITIIVVQF (417 aa). Mn(2+) contacts are provided by Asp-144 and Gly-145. Lys-202 carries the post-translational modification N6-acetyllysine. The Mn(2+) site is built by Asp-418 and Asp-516.

Belongs to the PP2C family. As to quaternary structure, heterodimer of a catalytic (PDP1) and a regulatory (PDPR) subunit. It depends on Mn(2+) as a cofactor. Mg(2+) serves as cofactor.

The protein localises to the mitochondrion. The catalysed reaction is O-phospho-L-seryl-[pyruvate dehydrogenase E1 alpha subunit] + H2O = L-seryl-[pyruvate dehydrogenase E1 alpha subunit] + phosphate. With respect to regulation, magnesium-dependent and calcium-stimulated. PDP1 activity strongly depends on its Ca(2+)-dependent binding to the lipoyl domain of E2 subunit of component of the pyruvate dehydrogenase complex. Mitochondrial enzyme that catalyzes the dephosphorylation and concomitant reactivation of the alpha subunit of the E1 component of the pyruvate dehydrogenase complex (PDC), thereby stimulating the conversion of pyruvate into acetyl-CoA. The chain is [Pyruvate dehydrogenase [acetyl-transferring]]-phosphatase 1, mitochondrial (Pdp1) from Mus musculus (Mouse).